The following is a 110-amino-acid chain: Insulin growth factor-like family member 1 (110 aa).

The N-terminal stretch at 1 to 24 is a signal peptide; sequence MAPRGCIVAVFAIFCISRLLCSHG. A glycan (N-linked (GlcNAc...) asparagine) is linked at Asn-71.

Belongs to the IGFL family. In terms of assembly, homodimer; disulfide-linked. Detected in ovary and spinal cord.

The protein resides in the secreted. Probable ligand of the IGFLR1 cell membrane receptor. In Homo sapiens (Human), this protein is Insulin growth factor-like family member 1 (IGFL1).